Consider the following 1228-residue polypeptide: Multimerin-1 (1228 aa).

Residues M1–G19 form the signal peptide. N-linked (GlcNAc...) asparagine glycosylation is present at N21. The disordered stretch occupies residues T68 to Q98. A compositionally biased stretch (polar residues) spans L79–S89. N97, N114, and N120 each carry an N-linked (GlcNAc...) asparagine glycan. N136 carries an N-linked (GlcNAc...) (complex) asparagine glycan. The interval N157–S200 is disordered. The segment covering G160–G175 has biased composition (gly residues). Residues R186–D188 carry the Cell attachment site motif. The segment covering G187 to S200 has biased composition (polar residues). An EMI domain is found at G207–L282. 3 disulfide bridges follow: C211-C272, C238-C245, and C271-C280. Residue T216 is glycosylated (O-linked (Fuc) threonine). An O-linked (Fuc) threonine glycan is attached at T265. Coiled-coil stretches lie at residues M333–E365 and N400–V430. An N-linked (GlcNAc...) asparagine glycan is attached at N344. 16 N-linked (GlcNAc...) asparagine glycosylation sites follow: N431, N507, N541, N576, N618, N680, N729, N783, N816, N828, N840, N921, N933, N942, N981, and N1020. The stretch at Y503–T523 forms a coiled coil. 2 coiled-coil regions span residues S580–Q650 and R675–D726. Positions N819–V869 form a coiled coil. An EGF-like domain is found at E1041–T1077. Disulfide bonds link C1045-C1056, C1050-C1065, and C1067-C1076. A glycan (O-linked (Fuc) threonine) is linked at T1055. A glycan (N-linked (GlcNAc...) asparagine) is linked at N1075. Residues R1096–T1228 form the C1q domain.

As to quaternary structure, multimeric. Composed of varying sized, disulfide-linked multimers, the smallest of which is a homotrimer. Proteolysis of the promultimerin in the N-terminal region, leads to the mature p155 form that is stored in platelets. Interacts with factor V/Va. In terms of processing, the N-terminus is blocked. Post-translationally, extensively N-glycosylated. O-fucosylated within the EMI domain (at Thr-216 and Thr-265) by FUT10/POFUT3 and FUT11/POFUT4. O-fucosylation at Thr-216 and Thr-1055 are required for facilitating protein folding and secretion. Synthesized by endothelial cells and megakaryocytes. Stored in platelet alpha granules and endothelial cell Weibel-Palade bodies, following activation of these cells, it is released and attached to megakaryocytes, platelets, endothelium and subendothelium of blood vessels. Not found in plasma. Found in vascular tissues such as placenta, lung, and liver.

The protein localises to the secreted. Functionally, carrier protein for platelet (but not plasma) factor V/Va. Plays a role in the storage and stabilization of factor V in platelets. Upon release following platelet activation, may limit platelet and plasma factor Va-dependent thrombin generation. Ligand for integrin alpha-IIb/beta-3 and integrin alpha-V/beta-3 on activated platelets, and may function as an extracellular matrix or adhesive protein. In Homo sapiens (Human), this protein is Multimerin-1 (MMRN1).